A 299-amino-acid polypeptide reads, in one-letter code: Pyridoxal 5'-phosphate synthase subunit PdxS (299 aa).

Position 24 (Asp-24) interacts with D-ribose 5-phosphate. Lys-81 acts as the Schiff-base intermediate with D-ribose 5-phosphate in catalysis. Gly-153 is a binding site for D-ribose 5-phosphate. Residue Arg-165 coordinates D-glyceraldehyde 3-phosphate. D-ribose 5-phosphate contacts are provided by residues Gly-219 and 240–241 (GS).

It belongs to the PdxS/SNZ family. In the presence of PdxT, forms a dodecamer of heterodimers.

The enzyme catalyses aldehydo-D-ribose 5-phosphate + D-glyceraldehyde 3-phosphate + L-glutamine = pyridoxal 5'-phosphate + L-glutamate + phosphate + 3 H2O + H(+). It participates in cofactor biosynthesis; pyridoxal 5'-phosphate biosynthesis. Catalyzes the formation of pyridoxal 5'-phosphate from ribose 5-phosphate (RBP), glyceraldehyde 3-phosphate (G3P) and ammonia. The ammonia is provided by the PdxT subunit. Can also use ribulose 5-phosphate and dihydroxyacetone phosphate as substrates, resulting from enzyme-catalyzed isomerization of RBP and G3P, respectively. This is Pyridoxal 5'-phosphate synthase subunit PdxS from Methanococcus aeolicus (strain ATCC BAA-1280 / DSM 17508 / OCM 812 / Nankai-3).